The following is a 219-amino-acid chain: Large ribosomal subunit protein uL3 (219 aa).

Gln151 carries the post-translational modification N5-methylglutamine.

This sequence belongs to the universal ribosomal protein uL3 family. In terms of assembly, part of the 50S ribosomal subunit. Forms a cluster with proteins L14 and L19. Post-translationally, methylated by PrmB.

Its function is as follows. One of the primary rRNA binding proteins, it binds directly near the 3'-end of the 23S rRNA, where it nucleates assembly of the 50S subunit. This chain is Large ribosomal subunit protein uL3, found in Blochmanniella floridana.